Here is a 264-residue protein sequence, read N- to C-terminus: tRNA pseudouridine synthase A (264 aa).

Asp-51 serves as the catalytic Nucleophile. Tyr-109 contacts substrate.

It belongs to the tRNA pseudouridine synthase TruA family. Homodimer.

The enzyme catalyses uridine(38/39/40) in tRNA = pseudouridine(38/39/40) in tRNA. Formation of pseudouridine at positions 38, 39 and 40 in the anticodon stem and loop of transfer RNAs. In Vibrio campbellii (strain ATCC BAA-1116), this protein is tRNA pseudouridine synthase A.